Here is a 610-residue protein sequence, read N- to C-terminus: T-cell immunomodulatory protein (610 aa).

The first 32 residues, 1 to 32 (MAAGRLPSARAVLAPLFLGLALLSVGPAPARA), serve as a signal peptide directing secretion. 7 N-linked (GlcNAc...) asparagine glycosylation sites follow: Asn-35, Asn-123, Asn-138, Asn-145, Asn-150, Asn-175, and Asn-241. One copy of the FG-GAP 1; atypical repeat lies at 98–135 (LVTSVVPGDYDGDSQMDVLLTYFPQNHTNSELGAVIFW). An FG-GAP 2; atypical repeat occupies 153–183 (FHDQPLIMDFNGDLIPDVFGITNESSQPQIL). Residues 256 to 291 (VVGQSAFADFDGDGHMDHLLPGCEDKDCQKSAIYLM) form an FG-GAP 3; atypical repeat. Asn-351, Asn-369, and Asn-480 each carry an N-linked (GlcNAc...) asparagine glycan. The chain crosses the membrane as a helical span at residues 565–585 (VLLTAVALIGVCIFILAIIAI).

This sequence belongs to the TIP family. As to quaternary structure, interacts with RUVBL1, RUVBL2 and alpha-tubulin.

It is found in the secreted. The protein localises to the membrane. Functionally, modulator of T-cell function. Has a protective effect in graft versus host disease model. The chain is T-cell immunomodulatory protein from Mus musculus (Mouse).